We begin with the raw amino-acid sequence, 724 residues long: Probable methyltransferase PMT28 (724 aa).

The Cytoplasmic portion of the chain corresponds to 1-22 (MMERKREMGIAYFARRIKQPRG). The helical; Signal-anchor for type II membrane protein transmembrane segment at 23–43 (IWVKMTFIVVLGLCFVFFWSF) threads the bilayer. Topologically, residues 44 to 724 (LSSSASTFNV…LCAQKTLWRP (681 aa)) are lumenal. Positions 63 to 211 (EPVSSRTKSA…ISKKRKRKGP (149 aa)) are disordered. Basic and acidic residues predominate over residues 71-98 (SAHEVSESSKLHERGKVESGSKSKEGKK). Positions 107 to 125 (HETKKKKEHAVSHPHKKKD) are enriched in basic residues. The span at 126–140 (VPKPVVEEVVVKEDQ) shows a compositional bias: basic and acidic residues. Positions 141–173 (EHEEAESDDSDQSNKEDGEEGTESDGNEGESDG) are enriched in acidic residues. 3 N-linked (GlcNAc...) asparagine glycosylation sites follow: N305, N316, and N568.

The protein belongs to the methyltransferase superfamily.

It is found in the golgi apparatus membrane. The polypeptide is Probable methyltransferase PMT28 (Arabidopsis thaliana (Mouse-ear cress)).